The following is a 207-amino-acid chain: MKVLVASNNAKKLGELRTILENAGLSSVEVVPLSAIDAYDEPVEDGRTFADNALIKARAGAHHSGLITIADDSGFAVEELNGMPGVLSARWSGQHGNDATNNELVLAQMKHVPEERRHAAFVSVCALVTPDGDEHIVEGRWEGRMLTAPRGANGFGYDPLFVPAEEDAAGTGRTSAEMSPAEKNAISHRGKALQQLVPIIAGYSTFF.

7 to 12 (SNNAKK) lines the substrate pocket. D72 functions as the Proton acceptor in the catalytic mechanism. D72 lines the Mg(2+) pocket. Substrate is bound by residues S73, 155 to 158 (FGYD), K183, and 188 to 189 (HR).

Belongs to the HAM1 NTPase family. Homodimer. The cofactor is Mg(2+).

It catalyses the reaction XTP + H2O = XMP + diphosphate + H(+). The catalysed reaction is dITP + H2O = dIMP + diphosphate + H(+). The enzyme catalyses ITP + H2O = IMP + diphosphate + H(+). Pyrophosphatase that catalyzes the hydrolysis of nucleoside triphosphates to their monophosphate derivatives, with a high preference for the non-canonical purine nucleotides XTP (xanthosine triphosphate), dITP (deoxyinosine triphosphate) and ITP. Seems to function as a house-cleaning enzyme that removes non-canonical purine nucleotides from the nucleotide pool, thus preventing their incorporation into DNA/RNA and avoiding chromosomal lesions. The chain is dITP/XTP pyrophosphatase from Corynebacterium diphtheriae (strain ATCC 700971 / NCTC 13129 / Biotype gravis).